The following is a 218-amino-acid chain: Small ribosomal subunit protein uS5 (218 aa).

Polar residues predominate over residues M1–G10. Positions M1–Q63 are disordered. Residues Q11–G25 are compositionally biased toward low complexity. Positions G31 to Q63 are enriched in basic and acidic residues. The region spanning W62–V125 is the S5 DRBM domain.

It belongs to the universal ribosomal protein uS5 family. In terms of assembly, part of the 30S ribosomal subunit. Contacts proteins S4 and S8.

Its function is as follows. With S4 and S12 plays an important role in translational accuracy. Functionally, located at the back of the 30S subunit body where it stabilizes the conformation of the head with respect to the body. This is Small ribosomal subunit protein uS5 from Synechococcus sp. (strain RCC307).